A 664-amino-acid chain; its full sequence is Armadillo repeat protein involved in nucleocytoplasmic transport Syo2 (664 aa).

The stretch at 77–119 (GLVSKLIDRISDDSVEVVVEATGALRNLAIEEGYSICMDMYRK) is one ARM repeat.

This sequence belongs to the nuclear import and ribosome assembly adapter family. In terms of assembly, forms a heterotrimeric complex with rpl5 and rpl11a or rpl11b; interaction of this complex with kap104 allows the nuclear import of the heterotrimer. Component of a hexameric 5S RNP precursor complex; this complex acts as a precursor for ribosome assembly.

It localises to the cytoplasm. The protein resides in the nucleus. In terms of biological role, nuclear import adapter that specifically recruits the two functionally and topologically linked ribosomal proteins rpl5 and rpl11 (encoded by rpl11a and rpl11b). Guarantees that this cargo pair remains bound together from the time of synthesis in the cytoplasm until delivery to the nascent 5S rRNA in the nucleus. The protein is Armadillo repeat protein involved in nucleocytoplasmic transport Syo2 of Schizosaccharomyces pombe (strain 972 / ATCC 24843) (Fission yeast).